The following is a 405-amino-acid chain: Tryptophan synthase beta chain (405 aa).

Lysine 98 carries the N6-(pyridoxal phosphate)lysine modification.

The protein belongs to the TrpB family. In terms of assembly, tetramer of two alpha and two beta chains. It depends on pyridoxal 5'-phosphate as a cofactor.

It catalyses the reaction (1S,2R)-1-C-(indol-3-yl)glycerol 3-phosphate + L-serine = D-glyceraldehyde 3-phosphate + L-tryptophan + H2O. It participates in amino-acid biosynthesis; L-tryptophan biosynthesis; L-tryptophan from chorismate: step 5/5. In terms of biological role, the beta subunit is responsible for the synthesis of L-tryptophan from indole and L-serine. The chain is Tryptophan synthase beta chain from Bradyrhizobium diazoefficiens (strain JCM 10833 / BCRC 13528 / IAM 13628 / NBRC 14792 / USDA 110).